A 145-amino-acid polypeptide reads, in one-letter code: 3-dehydroquinate dehydratase (145 aa).

The active-site Proton acceptor is Y23. N74, H80, and D87 together coordinate substrate. Catalysis depends on H100, which acts as the Proton donor. Residues 101 to 102 (IS) and R111 contribute to the substrate site.

Belongs to the type-II 3-dehydroquinase family. Homododecamer.

It carries out the reaction 3-dehydroquinate = 3-dehydroshikimate + H2O. The protein operates within metabolic intermediate biosynthesis; chorismate biosynthesis; chorismate from D-erythrose 4-phosphate and phosphoenolpyruvate: step 3/7. In terms of biological role, catalyzes a trans-dehydration via an enolate intermediate. In Mycobacterium leprae (strain Br4923), this protein is 3-dehydroquinate dehydratase.